Consider the following 361-residue polypeptide: Queuine tRNA-ribosyltransferase (361 aa).

The active-site Proton acceptor is the Asp89. Substrate contacts are provided by residues 89–93, Asp143, Gln185, and Gly212; that span reads DSGGF. Residues 243-249 are RNA binding; sequence GVGTPED. Asp262 (nucleophile) is an active-site residue. The segment at 267 to 271 is RNA binding; important for wobble base 34 recognition; it reads TRNAR. Residues Cys300, Cys302, Cys305, and His331 each contribute to the Zn(2+) site.

The protein belongs to the queuine tRNA-ribosyltransferase family. As to quaternary structure, homodimer. Within each dimer, one monomer is responsible for RNA recognition and catalysis, while the other monomer binds to the replacement base PreQ1. Zn(2+) is required as a cofactor.

The catalysed reaction is 7-aminomethyl-7-carbaguanine + guanosine(34) in tRNA = 7-aminomethyl-7-carbaguanosine(34) in tRNA + guanine. It participates in tRNA modification; tRNA-queuosine biosynthesis. In terms of biological role, catalyzes the base-exchange of a guanine (G) residue with the queuine precursor 7-aminomethyl-7-deazaguanine (PreQ1) at position 34 (anticodon wobble position) in tRNAs with GU(N) anticodons (tRNA-Asp, -Asn, -His and -Tyr). Catalysis occurs through a double-displacement mechanism. The nucleophile active site attacks the C1' of nucleotide 34 to detach the guanine base from the RNA, forming a covalent enzyme-RNA intermediate. The proton acceptor active site deprotonates the incoming PreQ1, allowing a nucleophilic attack on the C1' of the ribose to form the product. After dissociation, two additional enzymatic reactions on the tRNA convert PreQ1 to queuine (Q), resulting in the hypermodified nucleoside queuosine (7-(((4,5-cis-dihydroxy-2-cyclopenten-1-yl)amino)methyl)-7-deazaguanosine). The sequence is that of Queuine tRNA-ribosyltransferase from Nitrosomonas eutropha (strain DSM 101675 / C91 / Nm57).